Here is a 309-residue protein sequence, read N- to C-terminus: tRNA dimethylallyltransferase (309 aa).

An ATP-binding site is contributed by 11–18 (GPTATGKS). Residue 13-18 (TATGKS) participates in substrate binding.

It belongs to the IPP transferase family. Monomer. Requires Mg(2+) as cofactor.

The enzyme catalyses adenosine(37) in tRNA + dimethylallyl diphosphate = N(6)-dimethylallyladenosine(37) in tRNA + diphosphate. Catalyzes the transfer of a dimethylallyl group onto the adenine at position 37 in tRNAs that read codons beginning with uridine, leading to the formation of N6-(dimethylallyl)adenosine (i(6)A). The protein is tRNA dimethylallyltransferase of Rhodococcus jostii (strain RHA1).